The following is a 98-amino-acid chain: NADH-ubiquinone oxidoreductase chain 4L (98 aa).

3 consecutive transmembrane segments (helical) span residues 1 to 21 (MLPI…GVLI), 29 to 49 (TLLC…LMIT), and 59 to 79 (IPLI…ALLV).

Belongs to the complex I subunit 4L family. In terms of assembly, core subunit of respiratory chain NADH dehydrogenase (Complex I) which is composed of 45 different subunits.

It localises to the mitochondrion inner membrane. It catalyses the reaction a ubiquinone + NADH + 5 H(+)(in) = a ubiquinol + NAD(+) + 4 H(+)(out). Its function is as follows. Core subunit of the mitochondrial membrane respiratory chain NADH dehydrogenase (Complex I) which catalyzes electron transfer from NADH through the respiratory chain, using ubiquinone as an electron acceptor. Part of the enzyme membrane arm which is embedded in the lipid bilayer and involved in proton translocation. The sequence is that of NADH-ubiquinone oxidoreductase chain 4L (MT-ND4L) from Phascogale tapoatafa (Common wambenger).